A 579-amino-acid polypeptide reads, in one-letter code: MQQQTSADMNLLWGQLILEELARLGVKHVCMAPGSRSTPLTLAAASQTQLTRHIHFDERGLGFMALGLAKASNAPVAIITTSGTAVANLYPAIVEAWLTHVPLIILSGDRPPELIDCGANQAIIQPAIFAQYAKQVNLPTPDLGYPANALLSTIDHALANQHQPVHINCMYREPLYPTELVTLAHVKKTASVTTSTYLAPLNQWFENTKPLTRYASLTSAELPTTDTLMRFVHGKGVIVVGTLAPEDNPQQIVALAQKLGWPVLVDAQSQLRQHPGVIGHVDQLLLNPKANKQLEQAERILVFGGRFISKRLLQYIAQQSWHSYWHVVKHGDRLDPTHQSKEFYQASVQAVCQLPWPRSSQANWALQLLPLNESLESLFKQQIDNTTFGEAQVVRAIALAQSDQHILFIGNSLPIRLYDMYAPIATNTPAIYTNRGASGIDGLIATACGVAADKNAPTTLVMGDLSCLHDFNSLALLKQMTQPFVLVIINNDGGNIFNLLPVPNESLRNDFYRLSHGLEFGYGAAMFGLAYRQADDIESFNQAYQEAFEFNCASVIEVNVSPTQASDQITQISQWVKQH.

The protein belongs to the TPP enzyme family. MenD subfamily. As to quaternary structure, homodimer. Requires Mg(2+) as cofactor. Mn(2+) serves as cofactor. It depends on thiamine diphosphate as a cofactor.

It carries out the reaction isochorismate + 2-oxoglutarate + H(+) = 5-enolpyruvoyl-6-hydroxy-2-succinyl-cyclohex-3-ene-1-carboxylate + CO2. It participates in quinol/quinone metabolism; 1,4-dihydroxy-2-naphthoate biosynthesis; 1,4-dihydroxy-2-naphthoate from chorismate: step 2/7. It functions in the pathway quinol/quinone metabolism; menaquinone biosynthesis. Its function is as follows. Catalyzes the thiamine diphosphate-dependent decarboxylation of 2-oxoglutarate and the subsequent addition of the resulting succinic semialdehyde-thiamine pyrophosphate anion to isochorismate to yield 2-succinyl-5-enolpyruvyl-6-hydroxy-3-cyclohexene-1-carboxylate (SEPHCHC). In Shewanella frigidimarina (strain NCIMB 400), this protein is 2-succinyl-5-enolpyruvyl-6-hydroxy-3-cyclohexene-1-carboxylate synthase.